The sequence spans 316 residues: Pantothenate kinase (316 aa).

95–102 contributes to the ATP binding site; sequence GSVAVGKS.

The protein belongs to the prokaryotic pantothenate kinase family.

The protein localises to the cytoplasm. It carries out the reaction (R)-pantothenate + ATP = (R)-4'-phosphopantothenate + ADP + H(+). It functions in the pathway cofactor biosynthesis; coenzyme A biosynthesis; CoA from (R)-pantothenate: step 1/5. This is Pantothenate kinase from Pectobacterium carotovorum subsp. carotovorum (strain PC1).